The sequence spans 1066 residues: Thyrotropin-releasing hormone-degrading ectoenzyme (1066 aa).

The span at 1 to 14 (MALDGERGEQEEEK) shows a compositional bias: basic and acidic residues. The disordered stretch occupies residues 1 to 43 (MALDGERGEQEEEKKKKKKKKKRKKKEEEGAEKSSSPFAATMG). The Cytoplasmic segment spans residues 1 to 81 (MALDGERGEQ…ERHIAVHKRL (81 aa)). Residues 15 to 25 (KKKKKKKKRKK) show a composition bias toward basic residues. Threonine 71 bears the Phosphothreonine; by PKC mark. Residues 82–102 (VLAFAVSIVALLAVTMLAVLL) form a helical; Signal-anchor for type II membrane protein membrane-spanning segment. Topologically, residues 103 to 1066 (SLRFDECGAS…FQWLGKAMRH (964 aa)) are extracellular. Positions 117 to 177 (GTDGGLGGFP…SEEEQEQWQP (61 aa)) are disordered. The span at 118-127 (TDGGLGGFPE) shows a compositional bias: gly residues. Asparagine 131 carries an N-linked (GlcNAc...) asparagine glycan. Positions 143-154 (HAGEESSQREIG) are enriched in basic and acidic residues. N-linked (GlcNAc...) asparagine glycans are attached at residues asparagine 202, asparagine 217, asparagine 264, and asparagine 380. Substrate is bound at residue 446-450 (AAMEN). A Zn(2+)-binding site is contributed by histidine 482. Catalysis depends on glutamate 483, which acts as the Proton acceptor. Zn(2+) contacts are provided by histidine 486 and glutamate 505. 7 N-linked (GlcNAc...) asparagine glycosylation sites follow: asparagine 647, asparagine 676, asparagine 691, asparagine 705, asparagine 726, asparagine 842, and asparagine 948.

The protein belongs to the peptidase M1 family. Homodimer; disulfide-linked. Zn(2+) is required as a cofactor. Predominantly expressed in brain and pituitary. Lower levels in lung and liver.

Its subcellular location is the membrane. The catalysed reaction is Release of the N-terminal pyroglutamyl group from pGlu-|-His-Xaa tripeptides and pGlu-|-His-Xaa-Gly tetrapeptides.. Specific inactivation of TRH after its release. The polypeptide is Thyrotropin-releasing hormone-degrading ectoenzyme (Trhde) (Rattus norvegicus (Rat)).